The sequence spans 144 residues: Galectin b (144 aa).

In terms of domain architecture, Galectin spans 1 to 138 (DHIDLEFDVG…DAVLRKLCVV (138 aa)).

Functionally, lectin that binds beta-galactoside and a wide array of complex carbohydrates. The sequence is that of Galectin b from Aplysina lactuca (Marine sponge).